We begin with the raw amino-acid sequence, 145 residues long: MVKSARQGAGGFWRDFKDFILRGNVVDLAVAVVIGGAFTSIVNAFVAWLMAVLLQPVLDQAGVSQLQDLPLGLGELVIAIINFLIIAFVIFLIIKAIEKMQRKKAVEEEIVAEAQPDPVLEAQTNLTDSINRLITTLENQQSSSQ.

A run of 2 helical transmembrane segments spans residues 30-50 (VAVVIGGAFTSIVNAFVAWLM) and 74-94 (GELVIAIINFLIIAFVIFLII).

This sequence belongs to the MscL family. As to quaternary structure, homopentamer.

It is found in the cell inner membrane. Its function is as follows. Channel that opens in response to stretch forces in the membrane lipid bilayer. May participate in the regulation of osmotic pressure changes within the cell. The protein is Large-conductance mechanosensitive channel of Synechocystis sp. (strain ATCC 27184 / PCC 6803 / Kazusa).